A 289-amino-acid chain; its full sequence is Protease HtpX homolog (289 aa).

2 consecutive transmembrane segments (helical) span residues 3–23 and 28–48; these read IVGTILFAFYSVAIAAAWFFF and TILAIAIVGSVVLVGVQYKVG. Histidine 129 is a binding site for Zn(2+). Glutamate 130 is an active-site residue. Histidine 133 lines the Zn(2+) pocket. 2 helical membrane-spanning segments follow: residues 144–164 and 172–192; these read LGQGIASIVGIVAQYIVLFSG and FLAIVVGNLVQFLVTLFVLAI. Residue glutamate 197 coordinates Zn(2+). Residues 222 to 250 form a disordered region; sequence SQGNEQAAQQQRQRTSRGRGRRQRGQRND. A compositionally biased stretch (basic residues) spans 235–246; that stretch reads RTSRGRGRRQRG.

Belongs to the peptidase M48B family. Requires Zn(2+) as cofactor.

It is found in the cell membrane. The protein is Protease HtpX homolog of Halobacterium salinarum (strain ATCC 700922 / JCM 11081 / NRC-1) (Halobacterium halobium).